A 247-amino-acid polypeptide reads, in one-letter code: tRNA pseudouridine synthase A (247 aa).

Aspartate 52 functions as the Nucleophile in the catalytic mechanism. A substrate-binding site is contributed by tyrosine 113.

This sequence belongs to the tRNA pseudouridine synthase TruA family. Homodimer.

The catalysed reaction is uridine(38/39/40) in tRNA = pseudouridine(38/39/40) in tRNA. Its function is as follows. Formation of pseudouridine at positions 38, 39 and 40 in the anticodon stem and loop of transfer RNAs. The protein is tRNA pseudouridine synthase A of Rhizobium meliloti (strain 1021) (Ensifer meliloti).